The following is a 395-amino-acid chain: Zinc finger protein 385D (395 aa).

3 Matrin-type zinc fingers span residues 80–110, 204–234, and 267–297; these read ISCN…KLKA, LYCS…MLEA, and FHCE…RASG. A disordered region spans residues 282 to 308; sequence LKQHISSRRHKDRASGKPPKPKYSPYN.

It is found in the nucleus. In Rattus norvegicus (Rat), this protein is Zinc finger protein 385D (Znf385d).